Here is a 441-residue protein sequence, read N- to C-terminus: MIDVKLLRSNRELFEKNCEYRGVDKAPVEDFFRLDEEWRSINRELNGLRSQKNRETRKIAELIKNNGDASAEKKAVEDINARISDLENKLKKIEEERDRILWTIPNLVHESVPVCFGDENNQLVRYVGHAKVFRDDIEEFKKNSGNSQDYEVLDERPKSHVDLGLDLNVIDLESAARISGSRFYFIKNRLLKLEMALENYAVDFLSQRGFSIVEPPYMLNLESMRGATDLETFKDTLYKIEGEDLYLIATSEHSIAAMLSNQFLEEKDLPLRVAGISACFRREAGAHGKDTKGIFRVHQFNKIEQFVFCKPEDSWDFLEEILGNAEAIYRSLGIPYRVVNVCSGELGRLAAKKYDIEAWFPAQGKFREIVSASNDTDYQARSLNIKYRTSEGNRFVHTLNSTAIATTRILVAIMENFQEGDRIRIPDVLVPYTGFQYIEKG.

250-252 (TSE) is a binding site for L-serine. ATP is bound by residues 281 to 283 (RRE) and valine 297. Residue glutamate 304 participates in L-serine binding. 368–371 (EIVS) is a binding site for ATP. Position 402 (threonine 402) interacts with L-serine.

The protein belongs to the class-II aminoacyl-tRNA synthetase family. Type-1 seryl-tRNA synthetase subfamily. As to quaternary structure, homodimer. The tRNA molecule binds across the dimer.

The protein localises to the cytoplasm. It carries out the reaction tRNA(Ser) + L-serine + ATP = L-seryl-tRNA(Ser) + AMP + diphosphate + H(+). It catalyses the reaction tRNA(Sec) + L-serine + ATP = L-seryl-tRNA(Sec) + AMP + diphosphate + H(+). It functions in the pathway aminoacyl-tRNA biosynthesis; selenocysteinyl-tRNA(Sec) biosynthesis; L-seryl-tRNA(Sec) from L-serine and tRNA(Sec): step 1/1. In terms of biological role, catalyzes the attachment of serine to tRNA(Ser). Is also able to aminoacylate tRNA(Sec) with serine, to form the misacylated tRNA L-seryl-tRNA(Sec), which will be further converted into selenocysteinyl-tRNA(Sec). In Thermoplasma acidophilum (strain ATCC 25905 / DSM 1728 / JCM 9062 / NBRC 15155 / AMRC-C165), this protein is Serine--tRNA ligase.